The chain runs to 38 residues: Large ribosomal subunit protein bL36 (38 aa).

It belongs to the bacterial ribosomal protein bL36 family.

This Cellvibrio japonicus (strain Ueda107) (Pseudomonas fluorescens subsp. cellulosa) protein is Large ribosomal subunit protein bL36.